The following is a 120-amino-acid chain: Cytochrome c2 iso-1 (120 aa).

At Gln1 the chain carries Pyrrolidone carboxylic acid. Residues Cys15, Cys18, His19, and Met98 each coordinate heme c.

It belongs to the cytochrome c family. Binds 1 heme c group covalently per subunit.

Functionally, cytochrome c2 is found mainly in purple, non-sulfur, photosynthetic bacteria where it functions as the electron donor to the oxidized bacteriochlorophyll in the photophosphorylation pathway. However, it may also have a role in the respiratory chain and is found in some non-photosynthetic bacteria. The chain is Cytochrome c2 iso-1 from Rhodospirillum centenum (Rhodocista centenaria).